The following is a 586-amino-acid chain: Envelope glycoprotein (586 aa).

A signal peptide spans 1 to 22 (MNFNYHFIWSLVILSQISQVQA). Over 23–526 (GFGDPREALA…TSFHGFLPYV (504 aa)) the chain is Extracellular. N-linked (GlcNAc...) asparagine; by host glycans are attached at residues N120 and N237. A CXXC motif is present at residues 247–250 (CWLC). 3 disulfides stabilise this stretch: C247/C250, C247/C483, and C475/C482. N-linked (GlcNAc...) asparagine; by host glycosylation is found at N264, N276, N291, N304, N318, N324, N339, and N357. The interval 398-418 (LIPLFVGLGITTAVSTGAAGL) is fusion peptide. Coiled coils occupy residues 419–469 (GVSI…LLTA) and 479–515 (QEKC…DNPF). The tract at residues 458–474 (LQNRRGLDLLTAEQGGI) is immunosuppression. The CX6CC signature appears at 475-483 (CLALQEKCC). N-linked (GlcNAc...) asparagine; by host glycosylation is present at N487. Residues 527–547 (MPLLGPLLCLLLVLSFGPIIF) traverse the membrane as a helical segment. Topologically, residues 548-586 (NKLMTFIKHQIESIQAKPIQVHYHRLEQEDSGGSYLTLT) are cytoplasmic. The short motif at 570-573 (YHRL) is the YXXL motif; contains endocytosis signal element.

In terms of assembly, the mature envelope protein (Env) consists of a trimer of SU-TM heterodimers attached by a labile interchain disulfide bond. Post-translationally, specific enzymatic cleavages in vivo yield mature proteins. Envelope glycoproteins are synthesized as an inactive precursor that is N-glycosylated and processed likely by host cell furin or by a furin-like protease in the Golgi to yield the mature SU and TM proteins. The cleavage site between SU and TM requires the minimal sequence [KR]-X-[KR]-R. The R-peptide is released from the C-terminus of the cytoplasmic tail of the TM protein upon particle formation as a result of proteolytic cleavage by the viral protease. Cleavage of this peptide is required for TM to become fusogenic. The CXXC motif is highly conserved across a broad range of retroviral envelope proteins. It is thought to participate in the formation of a labile disulfide bond possibly with the CX6CC motif present in the transmembrane protein. Isomerization of the intersubunit disulfide bond to an SU intrachain disulfide bond is thought to occur upon receptor recognition in order to allow membrane fusion.

It localises to the virion membrane. Its subcellular location is the host cell membrane. The surface protein (SU) attaches the virus to the host cell by binding to its receptor. This interaction triggers the refolding of the transmembrane protein (TM) and is thought to activate its fusogenic potential by unmasking its fusion peptide. Fusion occurs at the host cell plasma membrane. Functionally, the transmembrane protein (TM) acts as a class I viral fusion protein. Under the current model, the protein has at least 3 conformational states: pre-fusion native state, pre-hairpin intermediate state, and post-fusion hairpin state. During viral and target cell membrane fusion, the coiled coil regions (heptad repeats) assume a trimer-of-hairpins structure, positioning the fusion peptide in close proximity to the C-terminal region of the ectodomain. The formation of this structure appears to drive apposition and subsequent fusion of viral and target cell membranes. Membranes fusion leads to delivery of the nucleocapsid into the cytoplasm. The chain is Envelope glycoprotein (env) from Mason-Pfizer monkey virus (MPMV).